Here is a 266-residue protein sequence, read N- to C-terminus: Putative carbamate hydrolase RutD (266 aa).

Residues 15–239 (PVVVLSAGLG…RVEMPWGGHA (225 aa)) form the AB hydrolase-1 domain.

Belongs to the AB hydrolase superfamily. Hydrolase RutD family.

The catalysed reaction is carbamate + 2 H(+) = NH4(+) + CO2. Involved in pyrimidine catabolism. May facilitate the hydrolysis of carbamate, a reaction that can also occur spontaneously. The polypeptide is Putative carbamate hydrolase RutD (Klebsiella variicola (strain At-22)).